We begin with the raw amino-acid sequence, 80 residues long: Exodeoxyribonuclease 7 small subunit (80 aa).

Positions 60–80 (LIDSDGTEHNLDPNNASAPEE) are disordered. Residues 61-70 (IDSDGTEHNL) are compositionally biased toward basic and acidic residues. Residues 71–80 (DPNNASAPEE) show a composition bias toward polar residues.

Belongs to the XseB family. As to quaternary structure, heterooligomer composed of large and small subunits.

It localises to the cytoplasm. It carries out the reaction Exonucleolytic cleavage in either 5'- to 3'- or 3'- to 5'-direction to yield nucleoside 5'-phosphates.. Functionally, bidirectionally degrades single-stranded DNA into large acid-insoluble oligonucleotides, which are then degraded further into small acid-soluble oligonucleotides. This Lactobacillus acidophilus (strain ATCC 700396 / NCK56 / N2 / NCFM) protein is Exodeoxyribonuclease 7 small subunit.